We begin with the raw amino-acid sequence, 411 residues long: Tyrosine--tRNA ligase (411 aa).

Residue Y34 coordinates L-tyrosine. Residues 39-48 (CTATSLHIGS) carry the 'HIGH' region motif. Positions 171 and 175 each coordinate L-tyrosine. The 'KMSKS' region signature appears at 231–235 (KMGKT). K234 is a binding site for ATP. In terms of domain architecture, S4 RNA-binding spans 345–411 (ISAYELFHEA…GKKRHILVRV (67 aa)).

This sequence belongs to the class-I aminoacyl-tRNA synthetase family. TyrS type 1 subfamily. Homodimer.

The protein localises to the cytoplasm. The catalysed reaction is tRNA(Tyr) + L-tyrosine + ATP = L-tyrosyl-tRNA(Tyr) + AMP + diphosphate + H(+). Catalyzes the attachment of tyrosine to tRNA(Tyr) in a two-step reaction: tyrosine is first activated by ATP to form Tyr-AMP and then transferred to the acceptor end of tRNA(Tyr). The polypeptide is Tyrosine--tRNA ligase (Rickettsia felis (strain ATCC VR-1525 / URRWXCal2) (Rickettsia azadi)).